The primary structure comprises 314 residues: Acetaldehyde dehydrogenase 4 (314 aa).

15 to 18 (SGNI) lines the NAD(+) pocket. The active-site Acyl-thioester intermediate is the Cys133. NAD(+) is bound by residues 164–172 (SAGPGTRAN) and Asn292.

This sequence belongs to the acetaldehyde dehydrogenase family.

It catalyses the reaction acetaldehyde + NAD(+) + CoA = acetyl-CoA + NADH + H(+). In Burkholderia lata (strain ATCC 17760 / DSM 23089 / LMG 22485 / NCIMB 9086 / R18194 / 383), this protein is Acetaldehyde dehydrogenase 4.